The sequence spans 189 residues: Probable nicotinate-nucleotide adenylyltransferase (189 aa).

Belongs to the NadD family.

The enzyme catalyses nicotinate beta-D-ribonucleotide + ATP + H(+) = deamido-NAD(+) + diphosphate. Its pathway is cofactor biosynthesis; NAD(+) biosynthesis; deamido-NAD(+) from nicotinate D-ribonucleotide: step 1/1. In terms of biological role, catalyzes the reversible adenylation of nicotinate mononucleotide (NaMN) to nicotinic acid adenine dinucleotide (NaAD). The sequence is that of Probable nicotinate-nucleotide adenylyltransferase from Bacillus anthracis (strain CDC 684 / NRRL 3495).